A 798-amino-acid polypeptide reads, in one-letter code: Probable DEAD-box ATP-dependent RNA helicase 48 (798 aa).

Disordered stretches follow at residues 76 to 100 (KMWG…MSPK), 117 to 148 (DFWN…NSPI), and 236 to 257 (FRKN…GKMI). Residues 132-148 (GSRSGSDSIDSTSNSPI) show a composition bias toward low complexity. The span at 242 to 252 (STEEDSDEEGD) shows a compositional bias: acidic residues. The short motif at 328–356 (KRFDESCISPLTLKALSASGILKMTRVQD) is the Q motif element. Residues 359–543 (LSECLDGKDA…QLVLKRDHSY (185 aa)) enclose the Helicase ATP-binding domain. Residue 372–379 (AKTGTGKS) participates in ATP binding. Residues 491–494 (DEAD) carry the DEAD box motif. Residues 577–726 (LLKEHINNTP…SIVKHQVDQS (150 aa)) form the Helicase C-terminal domain.

Belongs to the DEAD box helicase family.

It catalyses the reaction ATP + H2O = ADP + phosphate + H(+). In Arabidopsis thaliana (Mouse-ear cress), this protein is Probable DEAD-box ATP-dependent RNA helicase 48 (RH48).